The sequence spans 402 residues: Baeyer-Villiger oxidase notM (402 aa).

This sequence belongs to the questin oxidase family.

Functionally, baeyer-Villiger oxidase; part of the gene cluster that mediates the biosynthesis of notoamide, a fungal indole alkaloid that belongs to a family of natural products containing a characteristic bicyclo[2.2.2]diazaoctane core. The first step of notoamide biosynthesis involves coupling of L-proline and L-tryptophan by the bimodular NRPS notE, to produce cyclo-L-tryptophan-L-proline called brevianamide F. The reverse prenyltransferase notF then acts as a deoxybrevianamide E synthase and converts brevianamide F to deoxybrevianamide E via reverse prenylation at C-2 of the indole ring leading to the bicyclo[2.2.2]diazaoctane core. Deoxybrevianamide E is further hydroxylated at C-6 of the indole ring, likely catalyzed by the cytochrome P450 monooxygenase notG, to yield 6-hydroxy-deoxybrevianamide E. 6-hydroxy-deoxybrevianamide E is a specific substrate of the prenyltransferase notC for normal prenylation at C-7 to produce 6-hydroxy-7-prenyl-deoxybrevianamide, also called notoamide S. As the proposed pivotal branching point in notoamide biosynthesis, notoamide S can be diverted to notoamide E through an oxidative pyran ring closure putatively catalyzed by either notH cytochrome P450 monooxygenase or the notD FAD-linked oxidoreductase. This step would be followed by an indole 2,3-epoxidation-initiated pinacol-like rearrangement catalyzed by the notB FAD-dependent monooxygenase leading to the formation of notoamide C and notoamide D. On the other hand notoamide S is converted to notoamide T by notH (or notD), a bifunctional oxidase that also functions as the intramolecular Diels-Alderase responsible for generation of (+)-notoamide T. To generate antipodal (-)-notoaminide T, notH' (or notD') in Aspergillus versicolor is expected to catalyze a Diels-Alder reaction leading to the opposite stereochemistry. The remaining oxidoreductase notD (or notH) likely catalyzes the oxidative pyran ring formation to yield (+)-stephacidin A. The FAD-dependent monooxygenase notI is highly similar to notB and is predicted to catalyze a similar conversion from (+)-stephacidin A to (-)-notoamide B via the 2,3-epoxidation of (+)-stephacidin A followed by a pinacol-type rearrangement. Finally, it remains unclear which enzyme could be responsible for the final hydroxylation steps leading to notoamide A and sclerotiamide. The function of notM in the notoamide biosynthesis has not been determined yet. This is Baeyer-Villiger oxidase notM from Aspergillus sp. (strain MF297-2).